A 907-amino-acid polypeptide reads, in one-letter code: Protein translocase subunit SecA (907 aa).

ATP contacts are provided by residues Q87, 105-109 (GEGKT), and D512. Positions 870 to 897 (AALAATQPQVREGEKVGRNDPCPCGSGK) are disordered. Zn(2+) contacts are provided by C891, C893, C902, and H903.

Belongs to the SecA family. Monomer and homodimer. Part of the essential Sec protein translocation apparatus which comprises SecA, SecYEG and auxiliary proteins SecDF-YajC and YidC. Zn(2+) serves as cofactor.

It localises to the cell inner membrane. It is found in the cytoplasm. It carries out the reaction ATP + H2O + cellular proteinSide 1 = ADP + phosphate + cellular proteinSide 2.. In terms of biological role, part of the Sec protein translocase complex. Interacts with the SecYEG preprotein conducting channel. Has a central role in coupling the hydrolysis of ATP to the transfer of proteins into and across the cell membrane, serving both as a receptor for the preprotein-SecB complex and as an ATP-driven molecular motor driving the stepwise translocation of polypeptide chains across the membrane. The chain is Protein translocase subunit SecA from Shewanella piezotolerans (strain WP3 / JCM 13877).